The chain runs to 218 residues: Protein-methionine-sulfoxide reductase heme-binding subunit MsrQ (218 aa).

The next 5 membrane-spanning stretches (helical) occupy residues 12–32 (TLIKSMLFIAALLPFGRLALF), 82–102 (MLGLFAFFYACLHFTTFLWFD), 118–138 (PFITVGFSAFVLLIPLAITST), 150–170 (WQWLHRLVYVIAALGILHYWW), and 180–200 (QPIIFGTIVAVLLLVRVFWAW).

Belongs to the MsrQ family. As to quaternary structure, heterodimer of a catalytic subunit (MsrP) and a heme-binding subunit (MsrQ). It depends on FMN as a cofactor. Heme b serves as cofactor.

The protein resides in the cell inner membrane. Part of the MsrPQ system that repairs oxidized periplasmic proteins containing methionine sulfoxide residues (Met-O), using respiratory chain electrons. Thus protects these proteins from oxidative-stress damage caused by reactive species of oxygen and chlorine generated by the host defense mechanisms. MsrPQ is essential for the maintenance of envelope integrity under bleach stress, rescuing a wide series of structurally unrelated periplasmic proteins from methionine oxidation. MsrQ provides electrons for reduction to the reductase catalytic subunit MsrP, using the quinone pool of the respiratory chain. The chain is Protein-methionine-sulfoxide reductase heme-binding subunit MsrQ from Herminiimonas arsenicoxydans.